Consider the following 200-residue polypeptide: Large ribosomal subunit protein uL4 (200 aa).

Residues 44 to 70 (AQKTRAEVTGSGKKPWRQKGTGRARSG) form a disordered region.

This sequence belongs to the universal ribosomal protein uL4 family. In terms of assembly, part of the 50S ribosomal subunit.

Its function is as follows. One of the primary rRNA binding proteins, this protein initially binds near the 5'-end of the 23S rRNA. It is important during the early stages of 50S assembly. It makes multiple contacts with different domains of the 23S rRNA in the assembled 50S subunit and ribosome. Protein L4 is a both a transcriptional repressor and a translational repressor protein. It regulates transcription of the S10 operon (to which L4 belongs) by causing premature termination of transcription within the S10 leader. L4 controls the translation of the S10 operon by binding to its mRNA. In terms of biological role, this protein when expressed in E.coli represses both transcription and translation of the endogenous S10 operon. As the M.morganii S10 leader can be regulated in vitro by the E.coli L4 protein this strongly suggests the endogenous protein controls its own S10 operon in a similar fashion. Functionally, forms part of the polypeptide exit tunnel. The polypeptide is Large ribosomal subunit protein uL4 (rplD) (Morganella morganii (Proteus morganii)).